The primary structure comprises 484 residues: Ribosomal RNA small subunit methyltransferase F (484 aa).

S-adenosyl-L-methionine-binding positions include 119–125, E143, D170, and D188; that span reads ASAPGSK. C241 functions as the Nucleophile in the catalytic mechanism.

Belongs to the class I-like SAM-binding methyltransferase superfamily. RsmB/NOP family.

It is found in the cytoplasm. The enzyme catalyses cytidine(1407) in 16S rRNA + S-adenosyl-L-methionine = 5-methylcytidine(1407) in 16S rRNA + S-adenosyl-L-homocysteine + H(+). Specifically methylates the cytosine at position 1407 (m5C1407) of 16S rRNA. This chain is Ribosomal RNA small subunit methyltransferase F, found in Shewanella frigidimarina (strain NCIMB 400).